The chain runs to 280 residues: 4-diphosphocytidyl-2-C-methyl-D-erythritol kinase (280 aa).

K8 is an active-site residue. 91-101 (PVSAGLAGGSS) contributes to the ATP binding site. Residue D133 is part of the active site.

Belongs to the GHMP kinase family. IspE subfamily.

It carries out the reaction 4-CDP-2-C-methyl-D-erythritol + ATP = 4-CDP-2-C-methyl-D-erythritol 2-phosphate + ADP + H(+). It functions in the pathway isoprenoid biosynthesis; isopentenyl diphosphate biosynthesis via DXP pathway; isopentenyl diphosphate from 1-deoxy-D-xylulose 5-phosphate: step 3/6. In terms of biological role, catalyzes the phosphorylation of the position 2 hydroxy group of 4-diphosphocytidyl-2C-methyl-D-erythritol. The protein is 4-diphosphocytidyl-2-C-methyl-D-erythritol kinase of Clostridium novyi (strain NT).